Reading from the N-terminus, the 298-residue chain is Ribosomal protein L11 methyltransferase (298 aa).

Residues Thr-150, Gly-171, Asp-193, and Asn-232 each contribute to the S-adenosyl-L-methionine site.

It belongs to the methyltransferase superfamily. PrmA family.

The protein resides in the cytoplasm. The catalysed reaction is L-lysyl-[protein] + 3 S-adenosyl-L-methionine = N(6),N(6),N(6)-trimethyl-L-lysyl-[protein] + 3 S-adenosyl-L-homocysteine + 3 H(+). Functionally, methylates ribosomal protein L11. This Chromobacterium violaceum (strain ATCC 12472 / DSM 30191 / JCM 1249 / CCUG 213 / NBRC 12614 / NCIMB 9131 / NCTC 9757 / MK) protein is Ribosomal protein L11 methyltransferase.